The primary structure comprises 65 residues: Large ribosomal subunit protein bL35 (65 aa).

2 stretches are compositionally biased toward basic residues: residues 1-11 and 21-43; these read MPKIKTRRSAA and KFKRRRQNLRHILTKKAASRKMR. The interval 1–65 is disordered; the sequence is MPKIKTRRSA…KAVRRMLPNG (65 aa).

It belongs to the bacterial ribosomal protein bL35 family.

In Desulfovibrio desulfuricans (strain ATCC 27774 / DSM 6949 / MB), this protein is Large ribosomal subunit protein bL35.